Reading from the N-terminus, the 177-residue chain is Putative thioredoxin peroxidase (177 aa).

A Thioredoxin domain is found at 1-158; sequence MFPKTLTDSK…IIRLIDAITF (158 aa). Cysteine 45 serves as the catalytic Cysteine sulfenic acid (-SOH) intermediate.

It belongs to the peroxiredoxin family. AhpC/Prx1 subfamily. As to quaternary structure, homodimer; disulfide-linked, upon oxidation.

The enzyme catalyses a hydroperoxide + [thioredoxin]-dithiol = an alcohol + [thioredoxin]-disulfide + H2O. Its function is as follows. Thiol-specific peroxidase that catalyzes the reduction of hydrogen peroxide and organic hydroperoxides to water and alcohols, respectively. Plays a role in cell protection against oxidative stress by detoxifying peroxides and as sensor of hydrogen peroxide-mediated signaling events. The protein is Putative thioredoxin peroxidase of Encephalitozoon cuniculi (strain GB-M1) (Microsporidian parasite).